The sequence spans 312 residues: tRNA uridine(34) hydroxylase (312 aa).

Positions 147-237 constitute a Rhodanese domain; it reads SDRNVIFIDM…GILGYVHDAN (91 aa). The active-site Cysteine persulfide intermediate is the cysteine 201.

It belongs to the TrhO family.

The catalysed reaction is uridine(34) in tRNA + AH2 + O2 = 5-hydroxyuridine(34) in tRNA + A + H2O. Its function is as follows. Catalyzes oxygen-dependent 5-hydroxyuridine (ho5U) modification at position 34 in tRNAs. In Buchnera aphidicola subsp. Schizaphis graminum (strain Sg), this protein is tRNA uridine(34) hydroxylase.